Here is an 850-residue protein sequence, read N- to C-terminus: Protein translocase subunit SecA 2 (850 aa).

ATP-binding positions include Gln83, 101 to 105, and Asp491; that span reads GEGKT.

It belongs to the SecA family. As to quaternary structure, monomer and homodimer. Part of the essential Sec protein translocation apparatus which comprises SecA, SecYEG and auxiliary proteins SecDF. Other proteins may also be involved.

The protein resides in the cell membrane. It is found in the cytoplasm. It carries out the reaction ATP + H2O + cellular proteinSide 1 = ADP + phosphate + cellular proteinSide 2.. Its function is as follows. Part of the Sec protein translocase complex. Interacts with the SecYEG preprotein conducting channel. Has a central role in coupling the hydrolysis of ATP to the transfer of proteins into and across the cell membrane, serving as an ATP-driven molecular motor driving the stepwise translocation of polypeptide chains across the membrane. This Mycolicibacterium vanbaalenii (strain DSM 7251 / JCM 13017 / BCRC 16820 / KCTC 9966 / NRRL B-24157 / PYR-1) (Mycobacterium vanbaalenii) protein is Protein translocase subunit SecA 2.